Consider the following 267-residue polypeptide: Acyl-[acyl-carrier-protein]--UDP-N-acetylglucosamine O-acyltransferase (267 aa).

Belongs to the transferase hexapeptide repeat family. LpxA subfamily. Homotrimer.

It is found in the cytoplasm. The enzyme catalyses a (3R)-hydroxyacyl-[ACP] + UDP-N-acetyl-alpha-D-glucosamine = a UDP-3-O-[(3R)-3-hydroxyacyl]-N-acetyl-alpha-D-glucosamine + holo-[ACP]. Its pathway is glycolipid biosynthesis; lipid IV(A) biosynthesis; lipid IV(A) from (3R)-3-hydroxytetradecanoyl-[acyl-carrier-protein] and UDP-N-acetyl-alpha-D-glucosamine: step 1/6. Functionally, involved in the biosynthesis of lipid A, a phosphorylated glycolipid that anchors the lipopolysaccharide to the outer membrane of the cell. The sequence is that of Acyl-[acyl-carrier-protein]--UDP-N-acetylglucosamine O-acyltransferase from Hamiltonella defensa subsp. Acyrthosiphon pisum (strain 5AT).